We begin with the raw amino-acid sequence, 141 residues long: Small ribosomal subunit protein uS12 (141 aa).

Asp102 is modified (3-methylthioaspartic acid). The tract at residues 115-141 (GDASGVEKRRQQRSLYGAKRPKKEASK) is disordered.

This sequence belongs to the universal ribosomal protein uS12 family. In terms of assembly, part of the 30S ribosomal subunit. Contacts proteins S8 and S17. May interact with IF1 in the 30S initiation complex.

Functionally, with S4 and S5 plays an important role in translational accuracy. Its function is as follows. Interacts with and stabilizes bases of the 16S rRNA that are involved in tRNA selection in the A site and with the mRNA backbone. Located at the interface of the 30S and 50S subunits, it traverses the body of the 30S subunit contacting proteins on the other side and probably holding the rRNA structure together. The combined cluster of proteins S8, S12 and S17 appears to hold together the shoulder and platform of the 30S subunit. The sequence is that of Small ribosomal subunit protein uS12 from Ureaplasma parvum serovar 3 (strain ATCC 27815 / 27 / NCTC 11736).